A 918-amino-acid chain; its full sequence is Isoleucine--tRNA ligase (918 aa).

Residues proline 57–histidine 67 carry the 'HIGH' region motif. Glutamate 568 is an L-isoleucyl-5'-AMP binding site. The 'KMSKS' region signature appears at lysine 609 to serine 613. Residue lysine 612 coordinates ATP. Residues cysteine 894, cysteine 897, cysteine 909, and cysteine 912 each coordinate Zn(2+).

It belongs to the class-I aminoacyl-tRNA synthetase family. IleS type 1 subfamily. As to quaternary structure, monomer. It depends on Zn(2+) as a cofactor.

It localises to the cytoplasm. It catalyses the reaction tRNA(Ile) + L-isoleucine + ATP = L-isoleucyl-tRNA(Ile) + AMP + diphosphate. Its function is as follows. Catalyzes the attachment of isoleucine to tRNA(Ile). As IleRS can inadvertently accommodate and process structurally similar amino acids such as valine, to avoid such errors it has two additional distinct tRNA(Ile)-dependent editing activities. One activity is designated as 'pretransfer' editing and involves the hydrolysis of activated Val-AMP. The other activity is designated 'posttransfer' editing and involves deacylation of mischarged Val-tRNA(Ile). This chain is Isoleucine--tRNA ligase, found in Sulfurovum sp. (strain NBC37-1).